Reading from the N-terminus, the 262-residue chain is Histone chaperone cia1 (262 aa).

The disordered stretch occupies residues 157-262 (IQWDNPDFDD…KPEEKPETSQ (106 aa)). Coiled-coil stretches lie at residues 173 to 196 (DADE…EGEG) and 223 to 253 (KGSE…AEEK). Composition is skewed to acidic residues over residues 173-219 (DADE…GEGE) and 226-242 (EEEE…EEES). Residues 250–262 (AEEKPEEKPETSQ) are compositionally biased toward basic and acidic residues.

The protein belongs to the ASF1 family. In terms of assembly, interacts with histone H3 and histone H4.

The protein localises to the nucleus. Functionally, histone chaperone that facilitates histone deposition and histone exchange and removal during nucleosome assembly and disassembly. The polypeptide is Histone chaperone cia1 (cia1) (Schizosaccharomyces pombe (strain 972 / ATCC 24843) (Fission yeast)).